The chain runs to 163 residues: Oocyte-secreted protein 1 (163 aa).

The first 21 residues, 1 to 21, serve as a signal peptide directing secretion; sequence MKPSSGLRGLLVLFSLTWTCA.

Belongs to the PLAC1 family. Oocyte-specific.

It localises to the secreted. May be involved in cell differentiation. The chain is Oocyte-secreted protein 1 (OOSP1) from Bos taurus (Bovine).